The primary structure comprises 299 residues: Phosphoribosylaminoimidazole-succinocarboxamide synthase (299 aa).

It belongs to the SAICAR synthetase family.

The catalysed reaction is 5-amino-1-(5-phospho-D-ribosyl)imidazole-4-carboxylate + L-aspartate + ATP = (2S)-2-[5-amino-1-(5-phospho-beta-D-ribosyl)imidazole-4-carboxamido]succinate + ADP + phosphate + 2 H(+). The protein operates within purine metabolism; IMP biosynthesis via de novo pathway; 5-amino-1-(5-phospho-D-ribosyl)imidazole-4-carboxamide from 5-amino-1-(5-phospho-D-ribosyl)imidazole-4-carboxylate: step 1/2. The chain is Phosphoribosylaminoimidazole-succinocarboxamide synthase from Streptomyces coelicolor (strain ATCC BAA-471 / A3(2) / M145).